A 209-amino-acid polypeptide reads, in one-letter code: uncharacterized protein (209 aa).

The FCP1 homology domain maps to 1–199; the sequence is MQVFLDLDET…DELKRVTASL (199 aa).

This is an uncharacterized protein from Dryophytes versicolor (chameleon treefrog).